Here is a 120-residue protein sequence, read N- to C-terminus: Large ribosomal subunit protein bL20 (120 aa).

Belongs to the bacterial ribosomal protein bL20 family.

In terms of biological role, binds directly to 23S ribosomal RNA and is necessary for the in vitro assembly process of the 50S ribosomal subunit. It is not involved in the protein synthesizing functions of that subunit. The sequence is that of Large ribosomal subunit protein bL20 from Ligilactobacillus salivarius (strain UCC118) (Lactobacillus salivarius).